The sequence spans 84 residues: Inactive transposase YbfQ (84 aa).

The polypeptide is Inactive transposase YbfQ (ybfQ) (Escherichia coli (strain K12)).